Consider the following 139-residue polypeptide: MLQPARRKYRKEQKGRNTGISHSRGTAVSFGEFGLKAIGRGRITARQIEAARRAMTRHIKRGGRIWIRIFPDKPISNKPAEVRMGNGKGNPEYYVAEIQPGKMLYEMDGVDEALAREAFRLAAAKLPLLTTFVVRQVGQ.

Residues 1 to 13 show a composition bias toward basic residues; it reads MLQPARRKYRKEQ. A disordered region spans residues 1–23; sequence MLQPARRKYRKEQKGRNTGISHS.

It belongs to the universal ribosomal protein uL16 family. In terms of assembly, part of the 50S ribosomal subunit.

Functionally, binds 23S rRNA and is also seen to make contacts with the A and possibly P site tRNAs. This is Large ribosomal subunit protein uL16 from Herminiimonas arsenicoxydans.